Consider the following 507-residue polypeptide: Cell cycle serine/threonine-protein kinase hsk1 (507 aa).

Ser-22 bears the Phosphoserine mark. The 366-residue stretch at Tyr-68–Leu-433 folds into the Protein kinase domain. ATP-binding positions include Ile-74–Val-82 and Lys-129. Asp-216 serves as the catalytic Proton acceptor. Phosphothreonine is present on Thr-291. The tract at residues Phe-475 to Ala-507 is disordered. Position 493 is a phosphoserine (Ser-493).

This sequence belongs to the protein kinase superfamily. Ser/Thr protein kinase family. CDC7 subfamily. As to quaternary structure, heterodimer with the regulatory subunit him1/dfp1. May form homooligomeric complexes. Interacts with mcm10. Post-translationally, autophosphorylated. Phosphorylated by cds1 in vitro.

It localises to the nucleus. It carries out the reaction L-seryl-[protein] + ATP = O-phospho-L-seryl-[protein] + ADP + H(+). The enzyme catalyses L-threonyl-[protein] + ATP = O-phospho-L-threonyl-[protein] + ADP + H(+). With respect to regulation, phosphorylation of exogenous substrates activated by Dfp1. In terms of biological role, required for G1/S transition. Plays a role in DNA replication checkpoint signaling through regulating rad3 and cds1. Involved in the maintenance of mitotic chromosome structures during S phase through regulating the function of rad21. Required for initiation of mitotic DNA replication through phosphorylating mcm2/cdc19. Required for genome integrity. This Schizosaccharomyces pombe (strain 972 / ATCC 24843) (Fission yeast) protein is Cell cycle serine/threonine-protein kinase hsk1 (hsk1).